Here is a 329-residue protein sequence, read N- to C-terminus: MDKWYKKIIGARTIKTGLATFLTSLFCLMLDLTPIFAILTAIVTIEPTAKASLKKGYRRLPATVIGALFAVLFTFIFGDPSALTYTFSALFTILVCTKLNLQVGTTVAVLTSVAMIPGIHDAYLFNFFSRLLTALIGLVTAGLVNFIVLPPKYYQQIEDNLTQSEYKMYELFSSRCNELLLGKFDSDHSNDLLNKLMGVINKTETLTGYQKDELRYHKNKEDEWKRLKNISNRSYIDRLLATHLSNIIYLPKHIHLVFTPEEKIAIIKISNSVNNIIKSNHFEPHRSSASTLKSSVKRLEEFDQNQIKSHVIYEILLIYKLLDSRYNDK.

The next 5 membrane-spanning stretches (helical) occupy residues 25-45 (LFCLMLDLTPIFAILTAIVTI), 60-80 (LPATVIGALFAVLFTFIFGDP), 87-107 (FSALFTILVCTKLNLQVGTTV), 108-128 (AVLTSVAMIPGIHDAYLFNFF), and 131-151 (LLTALIGLVTAGLVNFIVLPP).

The protein belongs to the UPF0421 family.

Its subcellular location is the cell membrane. The protein is UPF0421 protein SH1063 of Staphylococcus haemolyticus (strain JCSC1435).